A 363-amino-acid chain; its full sequence is Anhydro-N-acetylmuramic acid kinase (363 aa).

10–17 (GTSLDGLD) is a binding site for ATP.

Belongs to the anhydro-N-acetylmuramic acid kinase family.

It carries out the reaction 1,6-anhydro-N-acetyl-beta-muramate + ATP + H2O = N-acetyl-D-muramate 6-phosphate + ADP + H(+). Its pathway is amino-sugar metabolism; 1,6-anhydro-N-acetylmuramate degradation. The protein operates within cell wall biogenesis; peptidoglycan recycling. In terms of biological role, catalyzes the specific phosphorylation of 1,6-anhydro-N-acetylmuramic acid (anhMurNAc) with the simultaneous cleavage of the 1,6-anhydro ring, generating MurNAc-6-P. Is required for the utilization of anhMurNAc either imported from the medium or derived from its own cell wall murein, and thus plays a role in cell wall recycling. Contributes to intrinsic fosfomycin resistance in P.putida. The protein is Anhydro-N-acetylmuramic acid kinase of Pseudomonas putida (strain ATCC 47054 / DSM 6125 / CFBP 8728 / NCIMB 11950 / KT2440).